A 398-amino-acid polypeptide reads, in one-letter code: 1-deoxy-D-xylulose 5-phosphate reductoisomerase (398 aa).

Residues Thr-11, Gly-12, Ser-13, Ile-14, and Asn-125 each coordinate NADPH. Lys-126 is a 1-deoxy-D-xylulose 5-phosphate binding site. Position 127 (Glu-127) interacts with NADPH. Position 151 (Asp-151) interacts with Mn(2+). The 1-deoxy-D-xylulose 5-phosphate site is built by Ser-152, Glu-153, Ser-186, and His-209. A Mn(2+)-binding site is contributed by Glu-153. Gly-215 contacts NADPH. Ser-222, Asn-227, Lys-228, and Glu-231 together coordinate 1-deoxy-D-xylulose 5-phosphate. Mn(2+) is bound at residue Glu-231.

It belongs to the DXR family. Requires Mg(2+) as cofactor. Mn(2+) is required as a cofactor.

The enzyme catalyses 2-C-methyl-D-erythritol 4-phosphate + NADP(+) = 1-deoxy-D-xylulose 5-phosphate + NADPH + H(+). Its pathway is isoprenoid biosynthesis; isopentenyl diphosphate biosynthesis via DXP pathway; isopentenyl diphosphate from 1-deoxy-D-xylulose 5-phosphate: step 1/6. Functionally, catalyzes the NADPH-dependent rearrangement and reduction of 1-deoxy-D-xylulose-5-phosphate (DXP) to 2-C-methyl-D-erythritol 4-phosphate (MEP). This chain is 1-deoxy-D-xylulose 5-phosphate reductoisomerase, found in Acinetobacter baylyi (strain ATCC 33305 / BD413 / ADP1).